The sequence spans 169 residues: MSNDTFYLKREKRFLVLLGIICLSLIGGALYMQIALGEAPCPLCILQRYALLFIAIFAFIGAAMNGRRGVTVFEALVTLSALCGIAAAGRHAWILAHPSDSCGIDILQPIVDGLPLATLFPTGFQVSGFCTTPYPPVLGLSLAQWALTAFVLTAILVPACIIRNRRKPY.

Over 1-14 (MSNDTFYLKREKRF) the chain is Cytoplasmic. Residues 15–31 (LVLLGIICLSLIGGALY) form a helical membrane-spanning segment. Over 32-49 (MQIALGEAPCPLCILQRY) the chain is Periplasmic. A disulfide bridge links Cys-41 with Cys-44. Residues 50-64 (ALLFIAIFAFIGAAM) traverse the membrane as a helical segment. Topologically, residues 65 to 71 (NGRRGVT) are cytoplasmic. A helical membrane pass occupies residues 72–89 (VFEALVTLSALCGIAAAG). The Periplasmic portion of the chain corresponds to 90–144 (RHAWILAHPSDSCGIDILQPIVDGLPLATLFPTGFQVSGFCTTPYPPVLGLSLAQ). Cysteines 102 and 130 form a disulfide. Residues 145 to 163 (WALTAFVLTAILVPACIIR) traverse the membrane as a helical segment. The Cytoplasmic portion of the chain corresponds to 164–169 (NRRKPY).

It belongs to the DsbB family.

The protein localises to the cell inner membrane. Required for disulfide bond formation in some periplasmic proteins. Acts by oxidizing the DsbA protein. The chain is Disulfide bond formation protein B from Pseudomonas syringae pv. tomato (strain ATCC BAA-871 / DC3000).